Consider the following 459-residue polypeptide: Phosphoglucosamine mutase (459 aa).

Residue Ser-102 is the Phosphoserine intermediate of the active site. Positions 102, 243, 245, and 247 each coordinate Mg(2+). Ser-102 is modified (phosphoserine).

This sequence belongs to the phosphohexose mutase family. Mg(2+) is required as a cofactor. Post-translationally, activated by phosphorylation.

It carries out the reaction alpha-D-glucosamine 1-phosphate = D-glucosamine 6-phosphate. In terms of biological role, catalyzes the conversion of glucosamine-6-phosphate to glucosamine-1-phosphate. The protein is Phosphoglucosamine mutase of Bartonella henselae (strain ATCC 49882 / DSM 28221 / CCUG 30454 / Houston 1) (Rochalimaea henselae).